The sequence spans 668 residues: Probable metal-nicotianamine transporter YSL5 (668 aa).

Positions 1–11 are enriched in low complexity; the sequence is MPPPETSSAAA. The disordered stretch occupies residues 1–22; the sequence is MPPPETSSAAAPSPPSPDPLPP. A compositionally biased stretch (pro residues) spans 12 to 22; the sequence is PSPPSPDPLPP. Helical transmembrane passes span 27 to 47, 51 to 71, 102 to 122, 147 to 167, 209 to 229, 268 to 288, 315 to 335, 383 to 403, 410 to 430, 443 to 463, 501 to 521, 557 to 577, 595 to 615, and 633 to 653; these read LTLR…VVIH, LTVG…FFLA, CAIA…IFAM, LGWM…SIVM, LVKY…FSGV, IVNC…WPFI, IAIS…FLII, LAVS…PIIF, LVLV…YGMG, IALF…AGLA, IGVA…WTAF, LEIC…KDVV, FYIG…LFAW, and GLIC…ILGV.

Belongs to the YSL (TC 2.A.67.2) family. In terms of tissue distribution, expressed in roots.

The protein localises to the membrane. May be involved in the transport of nicotianamine-chelated metals. In Oryza sativa subsp. japonica (Rice), this protein is Probable metal-nicotianamine transporter YSL5 (YSL5).